A 358-amino-acid polypeptide reads, in one-letter code: Neutral protease 2 homolog PADG_00776 (358 aa).

The signal sequence occupies residues 1-19 (MRRVSGILAVAAFTISAFA). The propeptide occupies 20-185 (GVIQPVAKDA…MNQFVKIAKL (166 aa)). Cystine bridges form between C188–C259 and C266–C284. An N-linked (GlcNAc...) asparagine glycan is attached at N249. Position 309 (H309) interacts with Zn(2+). Residue E310 is part of the active site. Residues H313 and D324 each coordinate Zn(2+).

It belongs to the peptidase M35 family. The cofactor is Zn(2+).

The protein localises to the secreted. It catalyses the reaction Preferential cleavage of bonds with hydrophobic residues in P1'. Also 3-Asn-|-Gln-4 and 8-Gly-|-Ser-9 bonds in insulin B chain.. Secreted metalloproteinase that allows assimilation of proteinaceous substrates. Shows high activities on basic nuclear substrates such as histone and protamine. This is Neutral protease 2 homolog PADG_00776 from Paracoccidioides brasiliensis (strain Pb18).